The following is a 307-amino-acid chain: Ornithine carbamoyltransferase (307 aa).

Carbamoyl phosphate contacts are provided by residues S54 to T57, Q81, R105, and H132 to Q135. L-ornithine-binding positions include N163, D221, and S225–M226. Carbamoyl phosphate is bound by residues C261 to L262 and R289.

This sequence belongs to the aspartate/ornithine carbamoyltransferase superfamily. OTCase family.

It is found in the cytoplasm. The enzyme catalyses carbamoyl phosphate + L-ornithine = L-citrulline + phosphate + H(+). It functions in the pathway amino-acid biosynthesis; L-arginine biosynthesis; L-arginine from L-ornithine and carbamoyl phosphate: step 1/3. In terms of biological role, reversibly catalyzes the transfer of the carbamoyl group from carbamoyl phosphate (CP) to the N(epsilon) atom of ornithine (ORN) to produce L-citrulline. The chain is Ornithine carbamoyltransferase from Aromatoleum aromaticum (strain DSM 19018 / LMG 30748 / EbN1) (Azoarcus sp. (strain EbN1)).